Here is an 887-residue protein sequence, read N- to C-terminus: Alanine--tRNA ligase (887 aa).

Zn(2+) contacts are provided by His563, His567, Cys677, and His681.

Belongs to the class-II aminoacyl-tRNA synthetase family. Zn(2+) serves as cofactor.

It is found in the cytoplasm. It catalyses the reaction tRNA(Ala) + L-alanine + ATP = L-alanyl-tRNA(Ala) + AMP + diphosphate. In terms of biological role, catalyzes the attachment of alanine to tRNA(Ala) in a two-step reaction: alanine is first activated by ATP to form Ala-AMP and then transferred to the acceptor end of tRNA(Ala). Also edits incorrectly charged Ser-tRNA(Ala) and Gly-tRNA(Ala) via its editing domain. This Dinoroseobacter shibae (strain DSM 16493 / NCIMB 14021 / DFL 12) protein is Alanine--tRNA ligase.